A 134-amino-acid polypeptide reads, in one-letter code: UPF0412 protein YaaI (134 aa).

The signal sequence occupies residues 1 to 23; sequence MKSVFTLSASLAISLMLCCTAQA.

It belongs to the UPF0412 family.

The polypeptide is UPF0412 protein YaaI (Escherichia coli O17:K52:H18 (strain UMN026 / ExPEC)).